The primary structure comprises 380 residues: Succinyl-diaminopimelate desuccinylase (380 aa).

Residue histidine 66 coordinates Zn(2+). Residue aspartate 68 is part of the active site. Residue aspartate 99 participates in Zn(2+) binding. Glutamate 135 serves as the catalytic Proton acceptor. Zn(2+) contacts are provided by glutamate 136, glutamate 164, and histidine 350.

This sequence belongs to the peptidase M20A family. DapE subfamily. As to quaternary structure, homodimer. It depends on Zn(2+) as a cofactor. Co(2+) is required as a cofactor.

It carries out the reaction N-succinyl-(2S,6S)-2,6-diaminopimelate + H2O = (2S,6S)-2,6-diaminopimelate + succinate. The protein operates within amino-acid biosynthesis; L-lysine biosynthesis via DAP pathway; LL-2,6-diaminopimelate from (S)-tetrahydrodipicolinate (succinylase route): step 3/3. Functionally, catalyzes the hydrolysis of N-succinyl-L,L-diaminopimelic acid (SDAP), forming succinate and LL-2,6-diaminopimelate (DAP), an intermediate involved in the bacterial biosynthesis of lysine and meso-diaminopimelic acid, an essential component of bacterial cell walls. The polypeptide is Succinyl-diaminopimelate desuccinylase (Magnetococcus marinus (strain ATCC BAA-1437 / JCM 17883 / MC-1)).